The sequence spans 70 residues: Putative membrane protein insertion efficiency factor (70 aa).

Belongs to the UPF0161 family.

Its subcellular location is the cell membrane. In terms of biological role, could be involved in insertion of integral membrane proteins into the membrane. The sequence is that of Putative membrane protein insertion efficiency factor from Symbiobacterium thermophilum (strain DSM 24528 / JCM 14929 / IAM 14863 / T).